The sequence spans 319 residues: Protein StrN (319 aa).

It functions in the pathway antibiotic biosynthesis; streptomycin biosynthesis. This Streptomyces griseus protein is Protein StrN (strN).